Reading from the N-terminus, the 367-residue chain is Phosphoribosylaminoimidazole-succinocarboxamide synthase (367 aa).

It belongs to the SAICAR synthetase family.

It catalyses the reaction 5-amino-1-(5-phospho-D-ribosyl)imidazole-4-carboxylate + L-aspartate + ATP = (2S)-2-[5-amino-1-(5-phospho-beta-D-ribosyl)imidazole-4-carboxamido]succinate + ADP + phosphate + 2 H(+). It functions in the pathway purine metabolism; IMP biosynthesis via de novo pathway; 5-amino-1-(5-phospho-D-ribosyl)imidazole-4-carboxamide from 5-amino-1-(5-phospho-D-ribosyl)imidazole-4-carboxylate: step 1/2. This chain is Phosphoribosylaminoimidazole-succinocarboxamide synthase, found in Shewanella oneidensis (strain ATCC 700550 / JCM 31522 / CIP 106686 / LMG 19005 / NCIMB 14063 / MR-1).